We begin with the raw amino-acid sequence, 740 residues long: Melanoma-associated antigen D4 (740 aa).

The span at 1-11 (MAEGSYRKESE) shows a compositional bias: basic and acidic residues. Disordered stretches follow at residues 1–27 (MAEGSYRKESEGYNVEDMDEGSDEVGE), 139–208 (ATHQ…GPST), 242–298 (PAGV…ALAK), and 321–377 (IPEP…ASQP). Acidic residues predominate over residues 14–27 (NVEDMDEGSDEVGE). Polar residues-rich tracts occupy residues 141 to 155 (HQASGGDTQPMTSAA) and 162 to 175 (PETSVASPHSSRML). Over residues 185–207 (APARSPQPQTSSQAQEAAAEGPS) the composition is skewed to low complexity. Positions 321–337 (IPEPESAAATSQQSAEP) are enriched in low complexity. The segment covering 354–363 (DEYESGEEER) has biased composition (acidic residues). Positions 414–612 (LQERANKLVK…REWRAHFLEA (199 aa)) constitute an MAGE domain. Positions 697–722 (WRAGVSSGTNGAASASMLDGPSTSST) are disordered.

Interacts with TRIM27.

May enhance ubiquitin ligase activity of RING-type zinc finger-containing E3 ubiquitin-protein ligases. Proposed to act through recruitment and/or stabilization of the Ubl-conjugating enzyme (E2) at the E3:substrate complex. The polypeptide is Melanoma-associated antigen D4 (MAGED4) (Bos taurus (Bovine)).